The chain runs to 611 residues: Oligoendopeptidase F homolog (611 aa).

Histidine 384 is a binding site for Zn(2+). Glutamate 385 is an active-site residue. Histidine 388 and histidine 391 together coordinate Zn(2+).

Belongs to the peptidase M3B family. Zn(2+) serves as cofactor.

The protein is Oligoendopeptidase F homolog (pepF) of Mycoplasma pneumoniae (strain ATCC 29342 / M129 / Subtype 1) (Mycoplasmoides pneumoniae).